The sequence spans 821 residues: Kinetochore protein SLK19 (821 aa).

Disordered stretches follow at residues M1–V52 and F99–E153. At T7 the chain carries Phosphothreonine; by CDC28. Residues Q15 to F51 show a composition bias toward polar residues. 2 stretches are compositionally biased toward basic and acidic residues: residues F99–V122 and S136–E153. Residues S188 and S189 each carry the phosphoserine modification. S201 carries the phosphoserine; by CDC28 modification. S216 bears the Phosphoserine mark. A Phosphothreonine modification is found at T273. Disordered stretches follow at residues P274–Q298 and E699–E720. A Phosphoserine modification is found at S283. A coiled-coil region spans residues A310–K821.

Cleaved by ESP1 at the onset of anaphase. In terms of processing, phosphorylated by CDC5/Polo-like kinase at the onset of anaphase. Phosphorylation takes places at proximity to cleavage sites and is required for an efficient cleavage by ESP1. Phosphorylated also by CDC28.

It is found in the chromosome. Its subcellular location is the centromere. It localises to the kinetochore. The protein resides in the cytoplasm. The protein localises to the cytoskeleton. It is found in the microtubule organizing center. Its subcellular location is the spindle pole body. Its function is as follows. Has a role in spindle assembly and stability. Required to ensure a timely exit form mitosis. Essential to maintain pre-anaphase spindle polarity. Associates to the plus ends of the microtubules at the kinetochore and spindle midzone. A component of the FEAR (CDC14 Early Anaphase Release) network which promotes CDC14 release from the nucleolus during early anaphase. Required for proper chromosome segregation during meiosis I where it prevents premature sister chromatid separation. The sequence is that of Kinetochore protein SLK19 (SLK19) from Saccharomyces cerevisiae (strain ATCC 204508 / S288c) (Baker's yeast).